The following is a 321-amino-acid chain: Low affinity immunoglobulin epsilon Fc receptor (321 aa).

Topologically, residues 1-21 (MEEGQYSEIEELPRRRCCRRG) are cytoplasmic. S-palmitoyl cysteine attachment occurs at residues C17 and C18. Residues 22–47 (TQIVLLGLVTAALWAGLLTLLLLWHW) traverse the membrane as a helical; Signal-anchor for type II membrane protein segment. Topologically, residues 48–321 (DTTQSLKQLE…LPTPSAPLHS (274 aa)) are extracellular. The N-linked (GlcNAc...) asparagine glycan is linked to N63. Residues 66–85 (QVSKNLESHHGDQMAQKSQS) are disordered. Repeats lie at residues 69–89 (KNLESHHGDQMAQKSQSTQIS), 90–110 (QELEELRAEQQRLKSQDLELS), and 111–131 (WNLNGLQADLSSFKSQELNER). Intrachain disulfides connect C160–C288, C163–C174, C191–C282, and C259–C273. Residues 162–284 (TCPEKWINFQ…RKLGAWVCDR (123 aa)) enclose the C-type lectin domain. Ca(2+) is bound by residues E249, T251, N269, and D270. The tract at residues 290–321 (PPASEGSAESMGPDSRPDPDGRLPTPSAPLHS) is disordered. S296 is a glycosylation site (O-linked (Xyl...) (chondroitin sulfate) serine).

As to quaternary structure, homotrimer. Interacts (via C-type lectin domain) with IGHE (via CH3 region); this interaction regulates IgE homeostasis. Interacts (via the C-terminus) with CR2/CD21 (via Sushi domain 1 and 2). Post-translationally, N- and O-glycosylated. In terms of processing, the secreted form sCD23 is produced by ADAM10-mediated ectodomain shedding. As to expression, detected in urine (at protein level).

The protein resides in the cell membrane. It localises to the secreted. Low-affinity receptor for immunoglobulin E (IgE) and CR2/CD21. Has essential roles in the regulation of IgE production and in the differentiation of B cells. On B cells, initiates IgE-dependent antigen uptake and presentation to T cells. On macrophages, upon IgE binding and antigen cross-linking induces intracellular killing of parasites through activation of L-Arginine-nitric oxide pathway. The protein is Low affinity immunoglobulin epsilon Fc receptor (FCER2) of Homo sapiens (Human).